We begin with the raw amino-acid sequence, 737 residues long: Polyribonucleotide nucleotidyltransferase (737 aa).

Mg(2+) contacts are provided by D489 and D495. The KH domain occupies 556–615 (PKIDTIKIDVDKIKIVIGKGGETIDKIIAETGVKIDIDEEGNVSIYSSDQDAINRAKEII). One can recognise an S1 motif domain in the interval 625 to 693 (DEVYRAKVVR…EKGRIDASMK (69 aa)). The interval 691-737 (SMKALLPRPPKPEHDEKGEKSERPHRPRHHKDHKPKKEFTETPKDSE) is disordered. Over residues 700–714 (PKPEHDEKGEKSERP) the composition is skewed to basic and acidic residues. A compositionally biased stretch (basic residues) spans 715 to 724 (HRPRHHKDHK). Positions 725 to 737 (PKKEFTETPKDSE) are enriched in basic and acidic residues.

The protein belongs to the polyribonucleotide nucleotidyltransferase family. Mg(2+) serves as cofactor.

The protein resides in the cytoplasm. It carries out the reaction RNA(n+1) + phosphate = RNA(n) + a ribonucleoside 5'-diphosphate. In terms of biological role, involved in mRNA degradation. Catalyzes the phosphorolysis of single-stranded polyribonucleotides processively in the 3'- to 5'-direction. The sequence is that of Polyribonucleotide nucleotidyltransferase from Streptococcus pneumoniae (strain ATCC 700669 / Spain 23F-1).